Here is a 211-residue protein sequence, read N- to C-terminus: Thymidine kinase (211 aa).

Residues 9 to 16 (STMNAGKS) and 87 to 90 (DEAQ) contribute to the ATP site. Catalysis depends on Glu88, which acts as the Proton acceptor. Residues Cys145, Cys147, Cys182, and His185 each contribute to the Zn(2+) site.

It belongs to the thymidine kinase family. Homotetramer.

The protein resides in the cytoplasm. The catalysed reaction is thymidine + ATP = dTMP + ADP + H(+). In Rhodopirellula baltica (strain DSM 10527 / NCIMB 13988 / SH1), this protein is Thymidine kinase.